The sequence spans 188 residues: Molybdopterin synthase catalytic subunit (188 aa).

The segment covering 1 to 14 (MTTQPPQDQTSTTP) has biased composition (low complexity). The tract at residues 1–23 (MTTQPPQDQTSTTPSLPPHLDPT) is disordered. Substrate-binding positions include 134 to 135 (HR), K150, and 157 to 159 (KRE).

This sequence belongs to the MoaE family. MOCS2B subfamily. Heterotetramer; composed of 2 small (MOCS2A) and 2 large (MOCS2B) subunits.

Its subcellular location is the cytoplasm. The catalysed reaction is 2 [molybdopterin-synthase sulfur-carrier protein]-C-terminal-Gly-aminoethanethioate + cyclic pyranopterin phosphate + H2O = molybdopterin + 2 [molybdopterin-synthase sulfur-carrier protein]-C-terminal Gly-Gly + 2 H(+). The protein operates within cofactor biosynthesis; molybdopterin biosynthesis. In terms of biological role, catalytic subunit of the molybdopterin synthase complex, a complex that catalyzes the conversion of precursor Z into molybdopterin. Acts by mediating the incorporation of 2 sulfur atoms from thiocarboxylated MOCS2A into precursor Z to generate a dithiolene group. The sequence is that of Molybdopterin synthase catalytic subunit from Neosartorya fischeri (strain ATCC 1020 / DSM 3700 / CBS 544.65 / FGSC A1164 / JCM 1740 / NRRL 181 / WB 181) (Aspergillus fischerianus).